The sequence spans 371 residues: Cytochrome b (371 aa).

The next 4 membrane-spanning stretches (helical) occupy residues 25-45, 69-90, 105-125, and 170-190; these read FGSM…FLAV, WMMQ…YIHI, WMSG…GYVL, and FFAL…LHII. Heme b contacts are provided by His75 and His89. Positions 174 and 188 each coordinate heme b. Position 193 (His193) interacts with a ubiquinone. 4 helical membrane passes run 218–238, 280–300, 312–332, and 339–358; these read HKDL…MSFF, LGGA…PFTH, LSQL…WAAT, and FIII…LSFP.

The protein belongs to the cytochrome b family. As to quaternary structure, the cytochrome bc1 complex contains 3 respiratory subunits (MT-CYB, CYC1 and UQCRFS1), 2 core proteins (UQCRC1 and UQCRC2) and probably 6 low-molecular weight proteins. Heme b is required as a cofactor.

It localises to the mitochondrion inner membrane. In terms of biological role, component of the ubiquinol-cytochrome c reductase complex (complex III or cytochrome b-c1 complex) that is part of the mitochondrial respiratory chain. The b-c1 complex mediates electron transfer from ubiquinol to cytochrome c. Contributes to the generation of a proton gradient across the mitochondrial membrane that is then used for ATP synthesis. In Apodora papuana (Papuan olive python), this protein is Cytochrome b (MT-CYB).